Here is a 436-residue protein sequence, read N- to C-terminus: ARDMTKQALPAVSEVTKDTLEEFKTADKVVLVAYFAADDKASNETFTSVANGLRDNFLFGATNDAALAKAEGVKQPGLVCTSPSTTARTSSPRPSMRTYPRLRKVASTPLIGEVGPETYAGYMAAGIPLAYIFAETPEEREEFAKELKPLALKHKGEINFATIDAKSFGQHAGNLNLKVGTWPAFAIQRTEKNEKFPTNQEAKITEKEIGKFVDDFLAGKIDPSIKSEPIPESNDGPVTVVVAHNYKDVVIDNDKDVLVEFYAPWCGHCKALAPKYEELGQLYASDELSKLVTIAKVDATLNDVPDEIQGFLPSSLFPLARRMPQSTTLVPHCRGSRPVHRRERLTQASASVGEAVEDATESAKASASSATDSAASAVSEGTETVKSGASVASDSASSAASEATKSVKSAASEVTNSASSAASEASASASSVKDEL.

Residues 216 to 365 (FLAGKIDPSI…VEDATESAKA (150 aa)) form the Thioredoxin domain. Active-site nucleophile residues include Cys266 and Cys269. An intrachain disulfide couples Cys266 to Cys269. The disordered stretch occupies residues 328 to 436 (TLVPHCRGSR…ASASSVKDEL (109 aa)). Residues 334-343 (RGSRPVHRRE) show a composition bias toward basic residues. Composition is skewed to low complexity over residues 362 to 377 (SAKA…AASA) and 385 to 436 (VKSG…KDEL). A Prevents secretion from ER motif is present at residues 433 to 436 (KDEL).

Belongs to the protein disulfide isomerase family.

The protein resides in the endoplasmic reticulum lumen. It catalyses the reaction Catalyzes the rearrangement of -S-S- bonds in proteins.. Participates in the folding of proteins containing disulfide bonds, may be involved in glycosylation, prolyl hydroxylation and triglyceride transfer. The protein is Protein disulfide-isomerase of Alternaria alternata (Alternaria rot fungus).